The chain runs to 59 residues: Large ribosomal subunit protein uL30 (59 aa).

The protein belongs to the universal ribosomal protein uL30 family. As to quaternary structure, part of the 50S ribosomal subunit.

This Acetivibrio thermocellus (strain ATCC 27405 / DSM 1237 / JCM 9322 / NBRC 103400 / NCIMB 10682 / NRRL B-4536 / VPI 7372) (Clostridium thermocellum) protein is Large ribosomal subunit protein uL30.